A 122-amino-acid polypeptide reads, in one-letter code: Large ribosomal subunit protein uL14 (122 aa).

It belongs to the universal ribosomal protein uL14 family. Part of the 50S ribosomal subunit. Forms a cluster with proteins L3 and L19. In the 70S ribosome, L14 and L19 interact and together make contacts with the 16S rRNA in bridges B5 and B8.

Binds to 23S rRNA. Forms part of two intersubunit bridges in the 70S ribosome. The chain is Large ribosomal subunit protein uL14 from Cereibacter sphaeroides (strain ATCC 17029 / ATH 2.4.9) (Rhodobacter sphaeroides).